Consider the following 209-residue polypeptide: Small ribosomal subunit protein uS4 (209 aa).

The tract at residues 23–46 is disordered; that stretch reads SRNPLLKKPHPPGQHGMQRKKKSD. The region spanning 93–156 is the S4 RNA-binding domain; the sequence is CRLDNMVYRM…RKLQSVQESL (64 aa).

It belongs to the universal ribosomal protein uS4 family. Part of the 30S ribosomal subunit. Contacts protein S5. The interaction surface between S4 and S5 is involved in control of translational fidelity.

Its function is as follows. One of the primary rRNA binding proteins, it binds directly to 16S rRNA where it nucleates assembly of the body of the 30S subunit. In terms of biological role, with S5 and S12 plays an important role in translational accuracy. This is Small ribosomal subunit protein uS4 from Chlamydia caviae (strain ATCC VR-813 / DSM 19441 / 03DC25 / GPIC) (Chlamydophila caviae).